Here is a 108-residue protein sequence, read N- to C-terminus: Movement protein TGB2 (108 aa).

Residues 1–8 are Cytoplasmic-facing; sequence MPLTPPPD. Residues 9–29 traverse the membrane as a helical segment; the sequence is YTKPFIAVVVGGTLAAFVLLL. Topologically, residues 30–71 are lumenal; the sequence is TRNTLPHTGDNLHSLPHGGTYCDGTKRIRYGGPHRSHVPELP. The helical transmembrane segment at 72 to 92 threads the bilayer; sequence AKSWALITVVAILIALHFSCL. At 93–108 the chain is on the cytoplasmic side; that stretch reads RTHRVHRCVLCHTTSG.

The protein belongs to the Tymovirales TGBp2 protein family.

Its subcellular location is the host endoplasmic reticulum membrane. In terms of biological role, plays a role in viral cell-to-cell propagation, by facilitating genome transport to neighboring plant cells through plasmosdesmata,. This chain is Movement protein TGB2, found in Lily virus X.